Consider the following 398-residue polypeptide: S-adenosylmethionine synthase (398 aa).

Histidine 16 lines the ATP pocket. Aspartate 18 contributes to the Mg(2+) binding site. Residue glutamate 51 coordinates K(+). The L-methionine site is built by glutamate 64 and glutamine 108. The flexible loop stretch occupies residues 108 to 118 (QSADIAQGVDA). ATP contacts are provided by residues 176–178 (DSK), 242–243 (KF), aspartate 251, 257–258 (RK), alanine 274, and lysine 278. Residue aspartate 251 coordinates L-methionine. Lysine 282 contacts L-methionine.

This sequence belongs to the AdoMet synthase family. As to quaternary structure, homotetramer; dimer of dimers. Requires Mg(2+) as cofactor. The cofactor is K(+).

Its subcellular location is the cytoplasm. The enzyme catalyses L-methionine + ATP + H2O = S-adenosyl-L-methionine + phosphate + diphosphate. The protein operates within amino-acid biosynthesis; S-adenosyl-L-methionine biosynthesis; S-adenosyl-L-methionine from L-methionine: step 1/1. Its function is as follows. Catalyzes the formation of S-adenosylmethionine (AdoMet) from methionine and ATP. The overall synthetic reaction is composed of two sequential steps, AdoMet formation and the subsequent tripolyphosphate hydrolysis which occurs prior to release of AdoMet from the enzyme. The chain is S-adenosylmethionine synthase from Nitrobacter hamburgensis (strain DSM 10229 / NCIMB 13809 / X14).